The following is a 1173-amino-acid chain: Clustered mitochondria protein homolog (1173 aa).

The segment covering 1–21 (MSTIDLPTSSLPGSSGDPSGT) has biased composition (low complexity). The disordered stretch occupies residues 1–25 (MSTIDLPTSSLPGSSGDPSGTEMSH). One can recognise a Clu domain in the interval 316–565 (VPHRADLSRT…SLFPLDAQFL (250 aa)). A disordered region spans residues 888 to 910 (KFTGKKGNKKKRNLGKSQNTTNR). Basic residues predominate over residues 890–901 (TGKKGNKKKRNL). Residues 984–1017 (ARAYCQLAMIYHQLEKKEEAVELARKAVIVCERF) form a TPR repeat.

This sequence belongs to the CLU family. As to quaternary structure, may associate with the eukaryotic translation initiation factor 3 (eIF-3) complex.

The protein resides in the cytoplasm. Its function is as follows. mRNA-binding protein involved in proper cytoplasmic distribution of mitochondria. In Schizosaccharomyces pombe (strain 972 / ATCC 24843) (Fission yeast), this protein is Clustered mitochondria protein homolog.